Here is a 283-residue protein sequence, read N- to C-terminus: Elongation factor Ts (283 aa).

Residues 84–87 form an involved in Mg(2+) ion dislocation from EF-Tu region; it reads TDFV.

This sequence belongs to the EF-Ts family.

It localises to the cytoplasm. Its function is as follows. Associates with the EF-Tu.GDP complex and induces the exchange of GDP to GTP. It remains bound to the aminoacyl-tRNA.EF-Tu.GTP complex up to the GTP hydrolysis stage on the ribosome. In Bifidobacterium longum subsp. infantis (strain ATCC 15697 / DSM 20088 / JCM 1222 / NCTC 11817 / S12), this protein is Elongation factor Ts.